A 326-amino-acid polypeptide reads, in one-letter code: Microtubule-associated protein RP/EB family member 2 (326 aa).

Serine 9 carries the phosphoserine modification. One can recognise a Calponin-homology (CH) domain in the interval 56-158 (TMSRHDIIAW…FIQWFKKFYD (103 aa)). The residue at position 166 (tyrosine 166) is a Phosphotyrosine. 2 disordered regions span residues 170-239 (EARQ…DKDL) and 297-326 (YASD…QEEY). The DCTN1-binding stretch occupies residues 186-326 (QIFNLPKKSH…DQQPQQQEEY (141 aa)). Residues 199–233 (SPTAGAAKSSPASKPGSTPSRPSSAKRASSSGSAS) show a composition bias toward low complexity. A phosphoserine mark is found at serine 218 and serine 235. The region spanning 235-305 (SDKDLETQVI…LYASDEQEGQ (71 aa)) is the EB1 C-terminal domain. The interval 258–301 (EGVEKERDFYFGKLREIELLCQEHGQENDDLVQRLMEVLYASDE) is APC-binding. Acidic residues predominate over residues 300-312 (DEQEGQTEEPEAE). Residues 317–326 (DQQPQQQEEY) are compositionally biased toward low complexity.

This sequence belongs to the MAPRE family. In terms of assembly, interacts with DCTN1. Interacts with APC (via C-terminal). Interacts with monomeric and polymerized tubulin. Interacts with SLAIN1. Interacts (via the N-terminal region) with BAG1. Interacts with ASB14. In terms of processing, ubiquitinated in an ASB14-dependent manner; leading to proteasomal degradation. Phosphorylated at Ser-235 by CK2 leading to enhanced cell adhesion. Phosphorylated by CDK1 and AURKB during mitosis reduces the binding affinity of MAPRE2 for microtubules. As to expression, expressed during early stages of apico-basal epithelial differentiation but down-regulated in most cells at later stages.

It is found in the cytoplasm. Its subcellular location is the cytoskeleton. The protein localises to the spindle. Functionally, adapter protein that is involved in microtubule polymerization, and spindle function by stabilizing microtubules and anchoring them at centrosomes. Therefore, ensures mitotic progression and genome stability. Acts as a central regulator of microtubule reorganization in apico-basal epithelial differentiation. Plays a role during oocyte meiosis by regulating microtubule dynamics. Participates in neurite growth by interacting with plexin B3/PLXNB3 and microtubule reorganization during apico-basal epithelial differentiation. Plays also an essential role for cell migration and focal adhesion dynamics. Mechanistically, recruits HAX1 to microtubules in order to regulate focal adhesion dynamics. This Mus musculus (Mouse) protein is Microtubule-associated protein RP/EB family member 2 (Mapre2).